Reading from the N-terminus, the 224-residue chain is uncharacterized protein (224 aa).

Residues 1 to 23 (MKKLLAAGIIGLLTVSIASPSFA) form the signal peptide. One can recognise a VWFA domain in the interval 31–224 (NVAVLFDGSG…WEKEAQKFTE (194 aa)).

This sequence to B.subtilis YwmC.

This is an uncharacterized protein from Bacillus subtilis (strain 168).